The primary structure comprises 374 residues: Probable dual-specificity RNA methyltransferase RlmN (374 aa).

Catalysis depends on glutamate 108, which acts as the Proton acceptor. The 248-residue stretch at 114-361 folds into the Radical SAM core domain; the sequence is YSDRNTVCIS…SCTVRDTRGR (248 aa). An intrachain disulfide couples cysteine 121 to cysteine 367. 3 residues coordinate [4Fe-4S] cluster: cysteine 128, cysteine 132, and cysteine 135. S-adenosyl-L-methionine is bound by residues 188–189, serine 222, 245–247, and asparagine 324; these read GE and SLH. The active-site S-methylcysteine intermediate is the cysteine 367.

This sequence belongs to the radical SAM superfamily. RlmN family. Requires [4Fe-4S] cluster as cofactor.

It is found in the cytoplasm. It catalyses the reaction adenosine(2503) in 23S rRNA + 2 reduced [2Fe-2S]-[ferredoxin] + 2 S-adenosyl-L-methionine = 2-methyladenosine(2503) in 23S rRNA + 5'-deoxyadenosine + L-methionine + 2 oxidized [2Fe-2S]-[ferredoxin] + S-adenosyl-L-homocysteine. It carries out the reaction adenosine(37) in tRNA + 2 reduced [2Fe-2S]-[ferredoxin] + 2 S-adenosyl-L-methionine = 2-methyladenosine(37) in tRNA + 5'-deoxyadenosine + L-methionine + 2 oxidized [2Fe-2S]-[ferredoxin] + S-adenosyl-L-homocysteine. In terms of biological role, specifically methylates position 2 of adenine 2503 in 23S rRNA and position 2 of adenine 37 in tRNAs. In Mycobacterium sp. (strain JLS), this protein is Probable dual-specificity RNA methyltransferase RlmN.